The primary structure comprises 263 residues: Flagellar brake protein YcgR (263 aa).

Positions 1-21 are disordered; sequence MAELSTPSPASPAPLDGGRGD. The region spanning 133 to 250 is the PilZ domain; sequence QRREFYRLQV…DTRIQRYIFK (118 aa).

It belongs to the YcgR family. Monomer. Interacts with the flagellar basal bodies.

It localises to the bacterial flagellum basal body. Its function is as follows. Acts as a flagellar brake, regulating swimming and swarming in a bis-(3'-5') cyclic diguanylic acid (c-di-GMP)-dependent manner. Binds 1 c-di-GMP dimer per subunit. Increasing levels of c-di-GMP lead to decreased motility. In Thauera aminoaromatica, this protein is Flagellar brake protein YcgR.